Consider the following 542-residue polypeptide: MLO-like protein 7 (542 aa).

Topologically, residues 1 to 38 (MITRSRCRRSLLWFLVFHGGATATGAPSGGKELSQTPT) are extracellular. The helical transmembrane segment at 39-59 (WAVAVVCTFLILISHLLEKGL) threads the bilayer. The Cytoplasmic portion of the chain corresponds to 60–82 (QRLANWLWKKHKNSLLEALEKIK). Residues 83 to 103 (AELMILGFISLLLTFGEPYIL) traverse the membrane as a helical segment. The Extracellular segment spans residues 104-165 (KICVPRKAAL…ITLKGLHQLH (62 aa)). A helical membrane pass occupies residues 166 to 186 (ILLFFLAIFHIVYSLITMMLS). The Cytoplasmic segment spans residues 187–288 (RLKIRGWKKW…IKRSLEDDFK (102 aa)). Residues 289-309 (LVVGISPVLWASFVIFLLFNV) form a helical membrane-spanning segment. At 310–315 (NGWRTL) the chain is on the extracellular side. A helical transmembrane segment spans residues 316 to 336 (FWASIPPLLIILAVGTKLQAI). Over 337–374 (MATMALEIVETHAVVQGMPLVQGSDRYFWFDCPQLLLH) the chain is Cytoplasmic. The helical transmembrane segment at 375 to 395 (LIHFALFQNAFQITHFFWIWY) threads the bilayer. The Extracellular portion of the chain corresponds to 396–414 (SFGLKSCFHKDFNLVVSKL). Residues 415–435 (FLCLGALILCSYITLPLYALV) form a helical membrane-spanning segment. At 436–542 (TQMGSHMKKA…QQQEMQFHNS (107 aa)) the chain is on the cytoplasmic side. The tract at residues 449–470 (EQMAKALKKWHKDIKLKKGKAR) is calmodulin-binding.

It belongs to the MLO family. Restricted to pollen, synergids, pistils and immature anthers. Also detected in seedlings, leaves, stems and inflorescens.

The protein localises to the cell membrane. Its subcellular location is the endomembrane system. Its function is as follows. May be involved in modulation of pathogen defense and leaf cell death. Activity seems to be regulated by Ca(2+)-dependent calmodulin binding and seems not to require heterotrimeric G proteins. Controls pollen tube reception in the female gametophyte synergids. This chain is MLO-like protein 7 (MLO7), found in Arabidopsis thaliana (Mouse-ear cress).